The chain runs to 328 residues: Phosphatidylglycerol--prolipoprotein diacylglyceryl transferase (328 aa).

The next 3 helical transmembrane spans lie at 15 to 35 (VIQGIPITWYSLSYILIILIS), 57 to 77 (IFMFSLVLGAILGGRLASTLV), and 106 to 126 (GMAIHGGFLGAIIAPLITINT). An a 1,2-diacyl-sn-glycero-3-phospho-(1'-sn-glycerol)-binding site is contributed by R156. Transmembrane regions (helical) follow at residues 242-262 (GFIFGVYVMLYAFFRFFIEYL) and 289-309 (ISMGQILSLTLMLSGLIWIIV).

Belongs to the Lgt family.

Its subcellular location is the cell inner membrane. The catalysed reaction is L-cysteinyl-[prolipoprotein] + a 1,2-diacyl-sn-glycero-3-phospho-(1'-sn-glycerol) = an S-1,2-diacyl-sn-glyceryl-L-cysteinyl-[prolipoprotein] + sn-glycerol 1-phosphate + H(+). It functions in the pathway protein modification; lipoprotein biosynthesis (diacylglyceryl transfer). In terms of biological role, catalyzes the transfer of the diacylglyceryl group from phosphatidylglycerol to the sulfhydryl group of the N-terminal cysteine of a prolipoprotein, the first step in the formation of mature lipoproteins. This Borreliella burgdorferi (strain ZS7) (Borrelia burgdorferi) protein is Phosphatidylglycerol--prolipoprotein diacylglyceryl transferase.